The sequence spans 1355 residues: Probable aldehyde oxidase 2 (1355 aa).

A 2Fe-2S ferredoxin-type domain is found at 9 to 96; it reads RPVVVTVNGE…HCAVTTSEGI (88 aa). 4 residues coordinate [2Fe-2S] cluster: C48, C53, C56, and C78. An FAD-binding PCMH-type domain is found at 244 to 422; it reads VAVTGDGWFH…VSISIPDWGS (179 aa). Residues 544–577 form a disordered region; it reads PENANVPNGSCTNGTANGSANSSPEKHSNVDSSD. Residues 548 to 566 are compositionally biased toward polar residues; sequence NVPNGSCTNGTANGSANSS.

Belongs to the xanthine dehydrogenase family. In terms of assembly, aldehyde oxidases (AO) are homodimers and heterodimers of AO subunits. [2Fe-2S] cluster is required as a cofactor. The cofactor is FAD. Mo-molybdopterin serves as cofactor.

It carries out the reaction an aldehyde + O2 + H2O = a carboxylate + H2O2 + H(+). This is Probable aldehyde oxidase 2 from Oryza sativa subsp. japonica (Rice).